The following is a 177-amino-acid chain: Small ribosomal subunit protein uS5 (177 aa).

The 64-residue stretch at 21–84 (LKEKMVSVNR…DEARQRMVRV (64 aa)) folds into the S5 DRBM domain.

Belongs to the universal ribosomal protein uS5 family. Part of the 30S ribosomal subunit. Contacts proteins S4 and S8.

Its function is as follows. With S4 and S12 plays an important role in translational accuracy. Located at the back of the 30S subunit body where it stabilizes the conformation of the head with respect to the body. The protein is Small ribosomal subunit protein uS5 of Nitrosomonas europaea (strain ATCC 19718 / CIP 103999 / KCTC 2705 / NBRC 14298).